The following is a 447-amino-acid chain: MNHSLYLVAGLGKTGLSIARYLKRNNKSFVVFDTRKEAPGLAEFQNEFPDVPIYLQQTPDEVISQVTDVITSPGLALDTPVLESARQAGALIYGDIECLAREISAPVIAITGTNGKSTVTTLVGEMAKAAGFRVAVAGNIGTPVLDMLDDEHHYDLWVLELSSFQLDLTYSLSPVVATILNVTPDHLDRHHTMEAYTQAKQRIYRGAKAVLFNREDVYTVPHQSCQADIKCISFGKDAPSMGNWGLIEQENTIYLAKGMERLLPVESILIKGVHNWMNALAACALAEAAGISMQHILNVLKTFPGLPHRCQWVREVDGVGWINDSKGTNIGATISAINGIGGSMQGKIVLIAGGQGKGADFQELAQPVSEFVRSIVLIGEDADKIESALAKVVPVVRASSLEGAVTIAKTCAKPGDVVLLSPACASLDMFRDFNHRGDVFTSSVRGL.

112-118 (GTNGKST) lines the ATP pocket.

This sequence belongs to the MurCDEF family.

It localises to the cytoplasm. It catalyses the reaction UDP-N-acetyl-alpha-D-muramoyl-L-alanine + D-glutamate + ATP = UDP-N-acetyl-alpha-D-muramoyl-L-alanyl-D-glutamate + ADP + phosphate + H(+). It participates in cell wall biogenesis; peptidoglycan biosynthesis. In terms of biological role, cell wall formation. Catalyzes the addition of glutamate to the nucleotide precursor UDP-N-acetylmuramoyl-L-alanine (UMA). The sequence is that of UDP-N-acetylmuramoylalanine--D-glutamate ligase from Legionella pneumophila (strain Lens).